A 94-amino-acid polypeptide reads, in one-letter code: Protein translocase subunit SecE (94 aa).

Residues 1-32 form a disordered region; the sequence is MTDAVGSIDMPDAQDEAPDSKKSRKGGKRGKK. Residues 22-32 show a composition bias toward basic residues; that stretch reads KSRKGGKRGKK. The chain crosses the membrane as a helical span at residues 65–85; the sequence is TVVIIFVVIMIGLVTLIDYGF.

This sequence belongs to the SecE/SEC61-gamma family. Component of the Sec protein translocase complex. Heterotrimer consisting of SecY, SecE and SecG subunits. The heterotrimers can form oligomers, although 1 heterotrimer is thought to be able to translocate proteins. Interacts with the ribosome. Interacts with SecDF, and other proteins may be involved. Interacts with SecA.

The protein resides in the cell membrane. Essential subunit of the Sec protein translocation channel SecYEG. Clamps together the 2 halves of SecY. May contact the channel plug during translocation. This chain is Protein translocase subunit SecE, found in Streptomyces coelicolor (strain ATCC BAA-471 / A3(2) / M145).